We begin with the raw amino-acid sequence, 218 residues long: MRLILLGPPGAGKGTQATFITQTYGIPQISTGDMLRAAVKAGTPLGIEAKKVMDAGGLMPDEIIIGLVKDRLAQPDCANGYLFDGYPRTIPQADALKDAGVKLDYVIEIAVPDEDIVKRMSGRWVHLASGRSYNTQSNPPKVAGQDDITGEALIQRDDDREETVRHRLGIYQQQTRPLVDYYSSWAAQDPANAPKYRKISGVGSVEEIKARAAAALQS.

10 to 15 (GAGKGT) contributes to the ATP binding site. The segment at 30 to 59 (STGDMLRAAVKAGTPLGIEAKKVMDAGGLM) is NMP. Residues T31, R36, 57–59 (GLM), 85–88 (GYPR), and Q92 each bind AMP. Positions 122-159 (GRWVHLASGRSYNTQSNPPKVAGQDDITGEALIQRDDD) are LID. Residues R123 and 132–133 (SY) each bind ATP. The AMP site is built by R156 and R167. ATP is bound at residue G203.

Belongs to the adenylate kinase family. In terms of assembly, monomer.

The protein resides in the cytoplasm. It catalyses the reaction AMP + ATP = 2 ADP. It functions in the pathway purine metabolism; AMP biosynthesis via salvage pathway; AMP from ADP: step 1/1. Functionally, catalyzes the reversible transfer of the terminal phosphate group between ATP and AMP. Plays an important role in cellular energy homeostasis and in adenine nucleotide metabolism. This is Adenylate kinase from Bordetella avium (strain 197N).